Here is a 420-residue protein sequence, read N- to C-terminus: UDP-N-acetylglucosamine 1-carboxyvinyltransferase (420 aa).

Phosphoenolpyruvate is bound at residue 22-23 (KN). R95 serves as a coordination point for UDP-N-acetyl-alpha-D-glucosamine. C119 (proton donor) is an active-site residue. 2-(S-cysteinyl)pyruvic acid O-phosphothioketal is present on C119. Residues 124-128 (RPIDQ), D307, and I329 contribute to the UDP-N-acetyl-alpha-D-glucosamine site.

This sequence belongs to the EPSP synthase family. MurA subfamily.

Its subcellular location is the cytoplasm. It catalyses the reaction phosphoenolpyruvate + UDP-N-acetyl-alpha-D-glucosamine = UDP-N-acetyl-3-O-(1-carboxyvinyl)-alpha-D-glucosamine + phosphate. It functions in the pathway cell wall biogenesis; peptidoglycan biosynthesis. Functionally, cell wall formation. Adds enolpyruvyl to UDP-N-acetylglucosamine. The polypeptide is UDP-N-acetylglucosamine 1-carboxyvinyltransferase (Myxococcus xanthus (strain DK1622)).